A 120-amino-acid polypeptide reads, in one-letter code: U15-barytoxin-Tl1c (120 aa).

An N-terminal signal peptide occupies residues 1–16 (MKLFMVLVASFAFAVA). Disulfide bonds link Cys55/Cys73, Cys66/Cys79, Cys70/Cys118, and Cys72/Cys89.

Belongs to the neurotoxin 03 (Tx2) family. 03 subfamily. As to expression, expressed by the venom gland.

It is found in the secreted. Functionally, ion channel inhibitor. In Trittame loki (Brush-footed trapdoor spider), this protein is U15-barytoxin-Tl1c.